A 207-amino-acid chain; its full sequence is LexA repressor (207 aa).

The segment at residues 28–48 (RAEIARELGFRSANAAEEHLK) is a DNA-binding region (H-T-H motif). Residues serine 124 and lysine 161 each act as for autocatalytic cleavage activity in the active site.

Belongs to the peptidase S24 family. In terms of assembly, homodimer.

The enzyme catalyses Hydrolysis of Ala-|-Gly bond in repressor LexA.. Represses a number of genes involved in the response to DNA damage (SOS response), including recA and lexA. In the presence of single-stranded DNA, RecA interacts with LexA causing an autocatalytic cleavage which disrupts the DNA-binding part of LexA, leading to derepression of the SOS regulon and eventually DNA repair. The sequence is that of LexA repressor from Vibrio vulnificus (strain CMCP6).